We begin with the raw amino-acid sequence, 146 residues long: Hemoglobin subunit beta (146 aa).

The region spanning 2–146 (HWTAEEKQLI…VAHALARKYH (145 aa)) is the Globin domain. The heme b site is built by histidine 63 and histidine 92.

Belongs to the globin family. As to quaternary structure, heterotetramer of two alpha chains and two beta chains. As to expression, red blood cells.

Involved in oxygen transport from the lung to the various peripheral tissues. This Ara ararauna (Blue-and-yellow macaw) protein is Hemoglobin subunit beta (HBB).